Reading from the N-terminus, the 415-residue chain is Serine--tRNA ligase (415 aa).

An L-serine-binding site is contributed by 231 to 233 (TAE). Residue 262–264 (RSE) participates in ATP binding. Glutamate 285 serves as a coordination point for L-serine. 349-352 (EISS) lines the ATP pocket. Serine 383 provides a ligand contact to L-serine.

It belongs to the class-II aminoacyl-tRNA synthetase family. Type-1 seryl-tRNA synthetase subfamily. In terms of assembly, homodimer. The tRNA molecule binds across the dimer.

The protein localises to the cytoplasm. It carries out the reaction tRNA(Ser) + L-serine + ATP = L-seryl-tRNA(Ser) + AMP + diphosphate + H(+). The catalysed reaction is tRNA(Sec) + L-serine + ATP = L-seryl-tRNA(Sec) + AMP + diphosphate + H(+). It participates in aminoacyl-tRNA biosynthesis; selenocysteinyl-tRNA(Sec) biosynthesis; L-seryl-tRNA(Sec) from L-serine and tRNA(Sec): step 1/1. Its function is as follows. Catalyzes the attachment of serine to tRNA(Ser). Is also able to aminoacylate tRNA(Sec) with serine, to form the misacylated tRNA L-seryl-tRNA(Sec), which will be further converted into selenocysteinyl-tRNA(Sec). This chain is Serine--tRNA ligase, found in Helicobacter pylori (strain G27).